A 420-amino-acid polypeptide reads, in one-letter code: Glucose-1-phosphate adenylyltransferase (420 aa).

Residues Tyr108, Gly173, 188 to 189 (EK), and Ser206 each bind alpha-D-glucose 1-phosphate.

It belongs to the bacterial/plant glucose-1-phosphate adenylyltransferase family. As to quaternary structure, homotetramer.

It catalyses the reaction alpha-D-glucose 1-phosphate + ATP + H(+) = ADP-alpha-D-glucose + diphosphate. Its pathway is glycan biosynthesis; glycogen biosynthesis. Its function is as follows. Involved in the biosynthesis of ADP-glucose, a building block required for the elongation reactions to produce glycogen. Catalyzes the reaction between ATP and alpha-D-glucose 1-phosphate (G1P) to produce pyrophosphate and ADP-Glc. This Paraburkholderia phytofirmans (strain DSM 17436 / LMG 22146 / PsJN) (Burkholderia phytofirmans) protein is Glucose-1-phosphate adenylyltransferase.